Reading from the N-terminus, the 134-residue chain is Transcription antitermination protein NusB (134 aa).

This sequence belongs to the NusB family.

In terms of biological role, involved in transcription antitermination. Required for transcription of ribosomal RNA (rRNA) genes. Binds specifically to the boxA antiterminator sequence of the ribosomal RNA (rrn) operons. The protein is Transcription antitermination protein NusB of Shewanella amazonensis (strain ATCC BAA-1098 / SB2B).